The chain runs to 1404 residues: MASSGAKAQWVGPSLGQGPRRRRWAWAEEQDTDGRRDQGWGNSQSLPEAPSPELLEDFRRAQEHLPPLEWDPDMQDSEESSGEETEADDASSPEGSTVPLPWLSRSNQQLDMSEEELDEASGRPEVDLAGESCTELECEDQGDSSPPPPGQGPAKGWVTFIKQGSNYRPSEHLEAQPSVEHSRTKSWSSGTVSLRQPSDSLGSTWEGDTEVPQPSILPKALPQSPCHNFPHPGDRNGGDVAPATPTEFRDSLAAPAQNAECSAGTWGEETTSLPSSRPEDQTWKRTKTSPKPLPSRFTGSVSPLSTRLGAIKKVVPQHKQGATLAGHSSSQAPKYGRGRRLNYPLPDFSKVGPRVRFPKDENYRPPKSRGHNRQQGSTRPLIFKSPAEIVRDVLLSSGEASLAKESSLAHTITRVPQEFQTPEQATELVHQLQEDYHKLLTKYAEAENTIDQLRLGAKVHLYSDPPQPSQSFCSGSMPQGSKVLSFSIPQPRVAEWWPDPAQDPQASEATGWPFPRTDLSPSSSPGVATPGRLPQSQGIATDQPSTGQTQALTSQASRLLAKVQSFEELVLAGHLPPQDQIKSLEQLRAAHMALEAEYLQACREELLDPQLDASQGSPRTLNLCRELEAEIYHLGQRLEELQDHMDQTQRETEPCRPDLQDSTPTMSFLPQSAHLSMPSGPVSLPDGQTYQEPATTTTTSPGSSCTLPINKKLSLSIKTEESPRGLPVPLRDRTLQVEQDFHGLLERYLSVKSLPEALRDEDEDDLEEEEEEQDHQGPLEVDSPATAPGKTEAVRVPPGERPTQAEESHRDATQEDEEQMGPMKSPDFRPSMARDTYTPVLDTAEVAQRGTKAMVSHQSSLTSLEESRPSELLPRKALLRAGGPHTEEPWMVSPETDSGFVGSETSIVSPFTQTPEHRLSHVSTSGPSAQHLTASVPGDRTSHPKARGLMVPRRATETGIPRSRTQQHFSSLSSPGRGAQSCHLEETSVAKIAVPRSEFKRQKQISKQLLPSGRTSPDSAPAPTAASTPHGSAESTANLLLNRTERDQAIKDLQAEVSRLRLQLEDSLHRPHPDGPACVASAFNHSTQTQEKLGSSPSWGPHYGSKSTERLSREPNGVEPAEPMGRRRARSSSVPRDVPRLYLSSESESPAPRLSSEKSRTFEEHPEAAQWGTRPQSSSKRRERVSFRGQYTGQEYHILSPKAILKDSGTPSCPHCHPIRTQDTGSAVSRDTTRGSSAADTLRCALCGEVKSSAEADGSSSGPSEKNTPKKPSTPILKRKNRQTGSPVRMAPGLWYLAAAPPAPAPPALAYISSAPIMPYLPPTVYYAAPAPTSAQTASPQPARGPRRTRHSVQLGLNDLEELQAALREAAQAAENVRSTTRQLSRSLSADLRHARSLRGSCLF.

2 disordered regions span residues 1–304 (MASS…VSPL) and 317–382 (QHKQ…RPLI). Ser-51 is modified (phosphoserine). The span at 70–91 (WDPDMQDSEESSGEETEADDAS) shows a compositional bias: acidic residues. Over residues 185–203 (KSWSSGTVSLRQPSDSLGS) the composition is skewed to polar residues. Ser-302 carries the post-translational modification Phosphoserine. Phosphoserine is present on residues Ser-485 and Ser-520. Residues 494–549 (AEWWPDPAQDPQASEATGWPFPRTDLSPSSSPGVATPGRLPQSQGIATDQPSTGQT) are disordered. Positions 534-549 (PQSQGIATDQPSTGQT) are enriched in polar residues. At Ser-617 the chain carries Phosphoserine. The segment covering 645 to 659 (MDQTQRETEPCRPDL) has biased composition (basic and acidic residues). The segment at 645–708 (MDQTQRETEP…TSPGSSCTLP (64 aa)) is disordered. 2 stretches are compositionally biased toward polar residues: residues 660–674 (QDST…QSAH) and 686–707 (DGQT…SCTL). A phosphoserine mark is found at Ser-750 and Ser-753. A PEST region spans residues 754–787 (LPEALRDEDEDDLEEEEEEQDHQGPLEVDSPATA). 2 disordered regions span residues 755–1038 (PEAL…STAN) and 1085–1185 (HSTQ…RERV). Acidic residues predominate over residues 759-773 (RDEDEDDLEEEEEEQ). Basic and acidic residues predominate over residues 803–813 (TQAEESHRDAT). 2 positions are modified to phosphoserine: Ser-831 and Ser-860. Residues 885 to 906 (HTEEPWMVSPETDSGFVGSETS) are PEST. Polar residues-rich tracts occupy residues 903 to 914 (SETSIVSPFTQT), 921 to 933 (HVST…QHLT), and 963 to 974 (SRTQQHFSSLSS). At Ser-971 the chain carries Phosphoserine. A compositionally biased stretch (low complexity) spans 1015–1029 (TSPDSAPAPTAASTP). The segment covering 1085–1098 (HSTQTQEKLGSSPS) has biased composition (polar residues). The a.T hook DNA-binding region spans 1088-1096 (QTQEKLGSS). Residues Ser-1144 and Ser-1145 each carry the phosphoserine modification. The segment covering 1155-1167 (SSEKSRTFEEHPE) has biased composition (basic and acidic residues). Position 1200 is a phosphoserine (Ser-1200). Disordered regions lie at residues 1208-1235 (SGTP…TTRG) and 1253-1286 (SAEA…QTGS). Residues 1221–1235 (TQDTGSAVSRDTTRG) are compositionally biased toward polar residues. A phosphoserine mark is found at Ser-1339, Ser-1352, and Ser-1389.

This sequence belongs to the AKNA family. As to quaternary structure, interacts with DCTN1. Interacts with MAPRE1/EB1. Interacts with ODF2. Interacts with CAMSAP3. Phosphorylated; phosphorylation regulates dissociation from and reassembly at the centrosome. Expressed in neural stem cells isolated at the peak of subventricular zone (SVZ): localizes at the subdistal appendages of the mother centriole in specific subtypes of neural stem cells and in almost all basal progenitors.

The protein localises to the cytoplasm. The protein resides in the cytoskeleton. Its subcellular location is the microtubule organizing center. It is found in the centrosome. It localises to the centriole. The protein localises to the nucleus. Its function is as follows. Centrosomal protein that plays a key role in cell delamination by regulating microtubule organization. Required for the delamination and retention of neural stem cells from the subventricular zone during neurogenesis. Also regulates the epithelial-to-mesenchymal transition in other epithelial cells. Acts by increasing centrosomal microtubule nucleation and recruiting nucleation factors and minus-end stabilizers, thereby destabilizing microtubules at the adherens junctions and mediating constriction of the apical endfoot. In addition, may also act as a transcription factor that specifically activates the expression of the CD40 receptor and its ligand CD40L/CD154, two cell surface molecules on lymphocytes that are critical for antigen-dependent-B-cell development. Binds to A/T-rich promoters. It is unclear how it can both act as a microtubule organizer and as a transcription factor; additional evidences are required to reconcile these two apparently contradictory functions. This chain is Microtubule organization protein AKNA, found in Mus musculus (Mouse).